The sequence spans 140 residues: 3-hydroxyacyl-[acyl-carrier-protein] dehydratase FabZ (140 aa).

His-47 is a catalytic residue.

The protein belongs to the thioester dehydratase family. FabZ subfamily.

It localises to the cytoplasm. The enzyme catalyses a (3R)-hydroxyacyl-[ACP] = a (2E)-enoyl-[ACP] + H2O. In terms of biological role, involved in unsaturated fatty acids biosynthesis. Catalyzes the dehydration of short chain beta-hydroxyacyl-ACPs and long chain saturated and unsaturated beta-hydroxyacyl-ACPs. This is 3-hydroxyacyl-[acyl-carrier-protein] dehydratase FabZ from Streptococcus pneumoniae serotype 4 (strain ATCC BAA-334 / TIGR4).